An 884-amino-acid polypeptide reads, in one-letter code: Probable disease resistance protein At1g12290 (884 aa).

The stretch at 26 to 66 (LYYIQNIKENLTSLEEAMEDLKALRDDLLRKVQTAEEGGLQ) forms a coiled coil. In terms of domain architecture, NB-ARC spans 139–443 (AHPATRAVGE…CEGFIDGDEN (305 aa)). Residue 182–189 (GMGGVGKT) coordinates ATP. LRR repeat units lie at residues 519-540 (VVSR…PECP), 541-563 (KLTT…FFRS), 566-588 (RLVV…ISEL), 590-612 (SLRY…LKLK), 613-635 (KLMH…DHLS), and 644-664 (NLRM…ENLE).

Belongs to the disease resistance NB-LRR family.

Functionally, probable disease resistance protein. This is Probable disease resistance protein At1g12290 from Arabidopsis thaliana (Mouse-ear cress).